The following is a 220-amino-acid chain: Uracil-DNA glycosylase (220 aa).

The Proton acceptor role is filled by D65.

It belongs to the uracil-DNA glycosylase (UDG) superfamily. UNG family.

It is found in the cytoplasm. The enzyme catalyses Hydrolyzes single-stranded DNA or mismatched double-stranded DNA and polynucleotides, releasing free uracil.. Functionally, excises uracil residues from the DNA which can arise as a result of misincorporation of dUMP residues by DNA polymerase or due to deamination of cytosine. The sequence is that of Uracil-DNA glycosylase from Leuconostoc mesenteroides subsp. mesenteroides (strain ATCC 8293 / DSM 20343 / BCRC 11652 / CCM 1803 / JCM 6124 / NCDO 523 / NBRC 100496 / NCIMB 8023 / NCTC 12954 / NRRL B-1118 / 37Y).